A 485-amino-acid chain; its full sequence is ATP-dependent 6-phosphofructokinase (485 aa).

ATP-binding positions include G105, 171 to 172, and 196 to 199; these read RG and GDGT. D197 serves as a coordination point for Mg(2+). Substrate-binding positions include 225-227, 270-272, E323, and 378-381; these read TID, MGR, and YMIR. The Proton acceptor role is filled by D227. Positions 483 to 485 match the Peroxisomal targeting signal motif; the sequence is SKL.

This sequence belongs to the phosphofructokinase type A (PFKA) family. PPi-dependent PFK group II subfamily. Atypical ATP-dependent clade 'X' sub-subfamily. As to quaternary structure, homotetramer. The cofactor is Mg(2+).

Its subcellular location is the glycosome. The enzyme catalyses beta-D-fructose 6-phosphate + ATP = beta-D-fructose 1,6-bisphosphate + ADP + H(+). The protein operates within carbohydrate degradation; glycolysis; D-glyceraldehyde 3-phosphate and glycerone phosphate from D-glucose: step 3/4. With respect to regulation, allosterically activated by AMP. Its function is as follows. Catalyzes the phosphorylation of D-fructose 6-phosphate to fructose 1,6-bisphosphate by ATP, the first committing step of glycolysis. This is ATP-dependent 6-phosphofructokinase from Trypanosoma cruzi (strain CL Brener).